A 445-amino-acid chain; its full sequence is Lipid A 1-phosphatase (445 aa).

Positions 1 to 22 (MNRESFLLLLVLLFALPLHLQA) are cleaved as a signal peptide.

It localises to the periplasm. It participates in bacterial outer membrane biogenesis; LPS lipid A biosynthesis. In terms of biological role, removes the 1-phosphate group from lipid A species. Absence of phosphate groups in lipid A renders the bacteria resistant to host-derived cationic antimicrobial peptides (CAMP) and allowing it to camouflage itself from the host innate immune response. In Porphyromonas gingivalis (strain ATCC 33277 / DSM 20709 / CIP 103683 / JCM 12257 / NCTC 11834 / 2561), this protein is Lipid A 1-phosphatase.